Reading from the N-terminus, the 95-residue chain is Selenoprotein K (95 aa).

A helical transmembrane segment spans residues 20–42; it reads LSFLTDMFWGITDFVVMFFQSII. The segment at 47-95 is disordered; that stretch reads TRRGCQNSSSSTRYDDGRGPPGHPRRMGRINHGSGPSAPPMAGGGGUGR. Selenocysteine 93 is a non-standard amino acid (selenocysteine).

This sequence belongs to the selenoprotein K family.

It is found in the endoplasmic reticulum membrane. Its subcellular location is the cell membrane. Required for Ca(2+) flux in immune cells and plays a role in T-cell proliferation and in T-cell and neutrophil migration. Involved in endoplasmic reticulum-associated degradation (ERAD) of soluble glycosylated proteins. Required for cell surface expression of CD36 and involved in macrophage uptake of low-density lipoprotein and in foam cell formation. Required for palmitoylation. In Xenopus laevis (African clawed frog), this protein is Selenoprotein K (selenok).